The primary structure comprises 181 residues: NADH-quinone oxidoreductase subunit B 2 (181 aa).

Cys44, Cys45, Cys110, and Cys139 together coordinate [4Fe-4S] cluster.

Belongs to the complex I 20 kDa subunit family. In terms of assembly, NDH-1 is composed of 14 different subunits. Subunits NuoB, C, D, E, F, and G constitute the peripheral sector of the complex. [4Fe-4S] cluster is required as a cofactor.

It is found in the cell inner membrane. The enzyme catalyses a quinone + NADH + 5 H(+)(in) = a quinol + NAD(+) + 4 H(+)(out). NDH-1 shuttles electrons from NADH, via FMN and iron-sulfur (Fe-S) centers, to quinones in the respiratory chain. The immediate electron acceptor for the enzyme in this species is believed to be a menaquinone. Couples the redox reaction to proton translocation (for every two electrons transferred, four hydrogen ions are translocated across the cytoplasmic membrane), and thus conserves the redox energy in a proton gradient. This chain is NADH-quinone oxidoreductase subunit B 2, found in Cytophaga hutchinsonii (strain ATCC 33406 / DSM 1761 / CIP 103989 / NBRC 15051 / NCIMB 9469 / D465).